Consider the following 279-residue polypeptide: 3-methyl-2-oxobutanoate hydroxymethyltransferase (279 aa).

D43 and D82 together coordinate Mg(2+). 3-methyl-2-oxobutanoate-binding positions include 43 to 44 (DS), D82, and K112. Position 114 (E114) interacts with Mg(2+). E181 functions as the Proton acceptor in the catalytic mechanism.

It belongs to the PanB family. Homodecamer; pentamer of dimers. Requires Mg(2+) as cofactor.

The protein resides in the cytoplasm. The catalysed reaction is 3-methyl-2-oxobutanoate + (6R)-5,10-methylene-5,6,7,8-tetrahydrofolate + H2O = 2-dehydropantoate + (6S)-5,6,7,8-tetrahydrofolate. Its pathway is cofactor biosynthesis; (R)-pantothenate biosynthesis; (R)-pantoate from 3-methyl-2-oxobutanoate: step 1/2. Functionally, catalyzes the reversible reaction in which hydroxymethyl group from 5,10-methylenetetrahydrofolate is transferred onto alpha-ketoisovalerate to form ketopantoate. This is 3-methyl-2-oxobutanoate hydroxymethyltransferase from Bacillus pumilus (strain SAFR-032).